The sequence spans 57 residues: Granulin-2 (57 aa).

2 cysteine pairs are disulfide-bonded: cysteine 4–cysteine 16 and cysteine 10–cysteine 26.

This sequence belongs to the granulin family. Post-translationally, granulins are disulfide bridged. Ubiquitous.

It localises to the secreted. Granulins have possible cytokine-like activity. They may play a role in inflammation, wound repair, and tissue remodeling. This is Granulin-2 from Cyprinus carpio (Common carp).